Reading from the N-terminus, the 361-residue chain is Porphobilinogen deaminase (361 aa).

Residue Ser-2 is modified to N-acetylserine. Ser-69 carries the phosphoserine modification. Lys-74 carries the N6-acetyllysine modification. At Ser-147 the chain carries Phosphoserine. S-(dipyrrolylmethanemethyl)cysteine is present on Cys-261.

This sequence belongs to the HMBS family. Monomer. The cofactor is dipyrromethane.

The protein resides in the cytoplasm. It is found in the cytosol. It catalyses the reaction 4 porphobilinogen + H2O = hydroxymethylbilane + 4 NH4(+). It participates in porphyrin-containing compound metabolism; protoporphyrin-IX biosynthesis; coproporphyrinogen-III from 5-aminolevulinate: step 2/4. In terms of biological role, as part of the heme biosynthetic pathway, catalyzes the sequential polymerization of four molecules of porphobilinogen to form hydroxymethylbilane, also known as preuroporphyrinogen. Catalysis begins with the assembly of the dipyrromethane cofactor by the apoenzyme from two molecules of porphobilinogen or from preuroporphyrinogen. The covalently linked cofactor acts as a primer, around which the tetrapyrrole product is assembled. In the last step of catalysis, the product, preuroporphyrinogen, is released, leaving the cofactor bound to the holodeaminase intact. In Mus musculus (Mouse), this protein is Porphobilinogen deaminase (Hmbs).